Consider the following 190-residue polypeptide: Protein GrpE (190 aa).

The tract at residues 1 to 40 is disordered; the sequence is MAKEKKEEVKEEEVSEATSTEGSTDVESTNNDDLTTETQA. The span at 22-40 shows a compositional bias: polar residues; that stretch reads GSTDVESTNNDDLTTETQA.

It belongs to the GrpE family. Homodimer.

Its subcellular location is the cytoplasm. In terms of biological role, participates actively in the response to hyperosmotic and heat shock by preventing the aggregation of stress-denatured proteins, in association with DnaK and GrpE. It is the nucleotide exchange factor for DnaK and may function as a thermosensor. Unfolded proteins bind initially to DnaJ; upon interaction with the DnaJ-bound protein, DnaK hydrolyzes its bound ATP, resulting in the formation of a stable complex. GrpE releases ADP from DnaK; ATP binding to DnaK triggers the release of the substrate protein, thus completing the reaction cycle. Several rounds of ATP-dependent interactions between DnaJ, DnaK and GrpE are required for fully efficient folding. The polypeptide is Protein GrpE (Pediococcus pentosaceus (strain ATCC 25745 / CCUG 21536 / LMG 10740 / 183-1w)).